A 323-amino-acid polypeptide reads, in one-letter code: Cell division protein ZipA (323 aa).

Topologically, residues 1 to 4 (MDLN) are periplasmic. Residues 5-25 (TILIILGIIALIILVVHGLWA) form a helical membrane-spanning segment. At 26–323 (NRREKSQYFK…AEKAYLDKVR (298 aa)) the chain is on the cytoplasmic side. Residues 44–73 (SRLREPPAHIQSASEEKKDANTSTPTAEVS) form a disordered region.

This sequence belongs to the ZipA family. In terms of assembly, interacts with FtsZ via their C-terminal domains.

It localises to the cell inner membrane. Its function is as follows. Essential cell division protein that stabilizes the FtsZ protofilaments by cross-linking them and that serves as a cytoplasmic membrane anchor for the Z ring. Also required for the recruitment to the septal ring of downstream cell division proteins. The sequence is that of Cell division protein ZipA from Pasteurella multocida (strain Pm70).